A 763-amino-acid chain; its full sequence is Putative pentatricopeptide repeat-containing protein At1g74580 (763 aa).

19 PPR repeats span residues 39–69 (TLST…MREN), 75–109 (LEGV…DCEP), 110–144 (TVFS…GITP), 145–179 (DVYS…GCEM), 180–214 (NVVA…GVSL), 215–249 (CLST…GVLP), 250–284 (NLFT…GPKP), 285–319 (DVIT…GLEP), 320–354 (DSYT…GFVP), 355–389 (DQFT…GIKP), 390–424 (NVIL…GLIP), 425–459 (EVQT…GYFP), 460–494 (DIFT…GVDP), 495–529 (DVYT…GCAP), 530–564 (NLFT…SVNP), 565–595 (DAVT…MEEA), 601–635 (STPT…CLGP), 636–670 (DGYT…GFIP), and 671–705 (SLTT…GLVP).

This sequence belongs to the PPR family. P subfamily.

The chain is Putative pentatricopeptide repeat-containing protein At1g74580 from Arabidopsis thaliana (Mouse-ear cress).